We begin with the raw amino-acid sequence, 65 residues long: Large ribosomal subunit protein bL33m (65 aa).

Residues 1 to 8 (MFLSAVFF) constitute a mitochondrion transit peptide.

This sequence belongs to the bacterial ribosomal protein bL33 family. As to quaternary structure, component of the mitochondrial large ribosomal subunit (mt-LSU). Mature mammalian 55S mitochondrial ribosomes consist of a small (28S) and a large (39S) subunit. The 28S small subunit contains a 12S ribosomal RNA (12S mt-rRNA) and 30 different proteins. The 39S large subunit contains a 16S rRNA (16S mt-rRNA), a copy of mitochondrial valine transfer RNA (mt-tRNA(Val)), which plays an integral structural role, and 52 different proteins.

It is found in the mitochondrion. The chain is Large ribosomal subunit protein bL33m (MRPL33) from Homo sapiens (Human).